The primary structure comprises 160 residues: Cyanate hydratase (160 aa).

Active-site residues include arginine 100, glutamate 103, and serine 126.

It belongs to the cyanase family.

It carries out the reaction cyanate + hydrogencarbonate + 3 H(+) = NH4(+) + 2 CO2. In terms of biological role, catalyzes the reaction of cyanate with bicarbonate to produce ammonia and carbon dioxide. The sequence is that of Cyanate hydratase from Emericella nidulans (strain FGSC A4 / ATCC 38163 / CBS 112.46 / NRRL 194 / M139) (Aspergillus nidulans).